Consider the following 496-residue polypeptide: COP9 signalosome complex subunit 3 (496 aa).

Positions 243-411 (QASHCLGIVI…GNETTTMLRF (169 aa)) constitute a PCI domain. A disordered region spans residues 468–496 (GSSERSGVVGSTEADGGGDLDEDLMGDGR). The segment covering 483 to 496 (GGGDLDEDLMGDGR) has biased composition (acidic residues).

This sequence belongs to the CSN3 family. In terms of assembly, component of the COP9 signalosome (CSN) complex.

Its subcellular location is the cytoplasm. The protein localises to the nucleus. In terms of biological role, component of the COP9 signalosome (CSN) complex that acts as an regulator of the ubiquitin (Ubl) conjugation pathway by mediating the deneddylation of the cullin subunit of SCF-type E3 ubiquitin-protein ligase complexes. The CSN complex seems to link protein degradation to sexual development. The chain is COP9 signalosome complex subunit 3 (csnC) from Emericella nidulans (strain FGSC A4 / ATCC 38163 / CBS 112.46 / NRRL 194 / M139) (Aspergillus nidulans).